Consider the following 180-residue polypeptide: Large ribosomal subunit protein uL5 (180 aa).

The protein belongs to the universal ribosomal protein uL5 family. Part of the 50S ribosomal subunit; part of the 5S rRNA/L5/L18/L25 subcomplex. Contacts the 5S rRNA and the P site tRNA. Forms a bridge to the 30S subunit in the 70S ribosome.

Functionally, this is one of the proteins that bind and probably mediate the attachment of the 5S RNA into the large ribosomal subunit, where it forms part of the central protuberance. In the 70S ribosome it contacts protein S13 of the 30S subunit (bridge B1b), connecting the 2 subunits; this bridge is implicated in subunit movement. Contacts the P site tRNA; the 5S rRNA and some of its associated proteins might help stabilize positioning of ribosome-bound tRNAs. This chain is Large ribosomal subunit protein uL5, found in Stenotrophomonas maltophilia (strain K279a).